A 92-amino-acid chain; its full sequence is Small ribosomal subunit protein uS19 (92 aa).

This sequence belongs to the universal ribosomal protein uS19 family.

Protein S19 forms a complex with S13 that binds strongly to the 16S ribosomal RNA. The sequence is that of Small ribosomal subunit protein uS19 from Cereibacter sphaeroides (strain ATCC 17029 / ATH 2.4.9) (Rhodobacter sphaeroides).